A 503-amino-acid polypeptide reads, in one-letter code: D-xylose-proton symporter-like 1 (503 aa).

The interval 1–23 (MGFDPENQSISSVGQVVGDSSSG) is disordered. Positions 8-23 (QSISSVGQVVGDSSSG) are enriched in low complexity. A run of 12 helical transmembrane segments spans residues 51 to 73 (FLFPALGALLFGYEIGATSCAIM), 95 to 115 (IITSGSLYGALIGSIVAFSVA), 129 to 149 (FLYLVGAIVTVVAPVFSILII), 152 to 172 (VTYGMGIGLTMHAAPMYIAET), 190 to 210 (VLGMVGGYGIGSLWITVISGW), 213 to 233 (MYATILPFPVIMGTGMCWLPA), 305 to 325 (ALTIAGGLVLFQQITGQPSVL), 346 to 366 (ISILLGLLKLVMTGVSVIVID), 374 to 394 (LLCGVSGMVISLFLLGSYYMF), 405 to 425 (ALLLYVGCYQLSFGPIGWLMI), 437 to 457 (GISLAVLVNFGANALVTFAFS), and 467 to 487 (ILFCAFGVICVVSLFFIYYIV).

This sequence belongs to the major facilitator superfamily. Sugar transporter (TC 2.A.1.1) family.

Its subcellular location is the membrane. The chain is D-xylose-proton symporter-like 1 from Arabidopsis thaliana (Mouse-ear cress).